Consider the following 94-residue polypeptide: Large ribosomal subunit protein bL27 (94 aa).

The propeptide occupies Met-1–Phe-9.

It belongs to the bacterial ribosomal protein bL27 family. Part of the 50S ribosomal subunit. Post-translationally, the N-terminus is cleaved by ribosomal processing cysteine protease Prp.

Its function is as follows. Plays a role in sporulation at high temperatures. In Bacillus subtilis (strain 168), this protein is Large ribosomal subunit protein bL27 (rpmA).